We begin with the raw amino-acid sequence, 333 residues long: Gap junction alpha-4 protein (333 aa).

Over Met-1–Val-20 the chain is Cytoplasmic. A helical membrane pass occupies residues Val-21–Ala-40. Over Gly-41 to Arg-76 the chain is Extracellular. Residues Tyr-77 to Leu-99 traverse the membrane as a helical segment. Over Ser-100–Arg-148 the chain is Cytoplasmic. The helical transmembrane segment at Gly-149–Tyr-171 threads the bilayer. Topologically, residues Gly-172–Ile-208 are extracellular. The helical transmembrane segment at Phe-209–Leu-231 threads the bilayer. Topologically, residues Leu-232–Val-333 are cytoplasmic. The tract at residues Ala-292–Val-333 is disordered. Over residues Lys-318–Val-333 the composition is skewed to low complexity.

It belongs to the connexin family. Alpha-type (group II) subfamily. In terms of assembly, a connexon is composed of a hexamer of connexins. As to expression, highly expressed in lung.

It is found in the cell membrane. It localises to the cell junction. The protein localises to the gap junction. In terms of biological role, one gap junction consists of a cluster of closely packed pairs of transmembrane channels, the connexons, through which materials of low MW diffuse from one cell to a neighboring cell. The sequence is that of Gap junction alpha-4 protein (Gja4) from Rattus norvegicus (Rat).